A 299-amino-acid polypeptide reads, in one-letter code: Phosphatidylcholine-sterol acyltransferase (299 aa).

N-linked (GlcNAc...) asparagine glycosylation occurs at Asn30. Residue Ser127 is the Nucleophile of the active site. Asn185 carries an N-linked (GlcNAc...) asparagine glycan. A disulfide bond links Cys226 and Cys269. Catalysis depends on charge relay system residues Asp258 and His290.

This sequence belongs to the AB hydrolase superfamily. Lipase family.

The protein localises to the secreted. The enzyme catalyses a sterol + a 1,2-diacyl-sn-glycero-3-phosphocholine = a sterol ester + a 1-acyl-sn-glycero-3-phosphocholine. Its activity is regulated as follows. APOA1 is the most potent activator in plasma. Also activated by APOE, APOC1 and APOA4. In terms of biological role, central enzyme in the extracellular metabolism of plasma lipoproteins. Synthesized mainly in the liver and secreted into plasma where it converts cholesterol and phosphatidylcholines (lecithins) to cholesteryl esters and lysophosphatidylcholines on the surface of high and low density lipoproteins (HDLs and LDLs). The cholesterol ester is then transported back to the liver. Has a preference for plasma 16:0-18:2 or 18:O-18:2 phosphatidylcholines. Also produced in the brain by primary astrocytes, and esterifies free cholesterol on nascent APOE-containing lipoproteins secreted from glia and influences cerebral spinal fluid (CSF) APOE- and APOA1 levels. Together with APOE and the cholesterol transporter ABCA1, plays a key role in the maturation of glial-derived, nascent lipoproteins. Required for remodeling high-density lipoprotein particles into their spherical forms. The sequence is that of Phosphatidylcholine-sterol acyltransferase (LCAT) from Eliomys quercinus (Garden dormouse).